An 82-amino-acid polypeptide reads, in one-letter code: Putative membrane protein insertion efficiency factor (82 aa).

Belongs to the UPF0161 family.

It is found in the cell inner membrane. Functionally, could be involved in insertion of integral membrane proteins into the membrane. The chain is Putative membrane protein insertion efficiency factor from Rickettsia massiliae (strain Mtu5).